Reading from the N-terminus, the 145-residue chain is Small ribosomal subunit protein eS19 (145 aa).

Lys23 carries the post-translational modification N6-acetyllysine. Arg67 carries the omega-N-methylarginine modification. N6-acetyllysine is present on residues Lys111 and Lys115. At Lys143 the chain carries N6-succinyllysine.

Belongs to the eukaryotic ribosomal protein eS19 family. As to quaternary structure, component of the small ribosomal subunit. Part of the small subunit (SSU) processome, composed of more than 70 proteins and the RNA chaperone small nucleolar RNA (snoRNA) U3. Interacts with RPS19BP1.

The protein localises to the cytoplasm. The protein resides in the nucleus. It is found in the nucleolus. Component of the small ribosomal subunit. The ribosome is a large ribonucleoprotein complex responsible for the synthesis of proteins in the cell. Required for pre-rRNA processing and maturation of 40S ribosomal subunits. Part of the small subunit (SSU) processome, first precursor of the small eukaryotic ribosomal subunit. During the assembly of the SSU processome in the nucleolus, many ribosome biogenesis factors, an RNA chaperone and ribosomal proteins associate with the nascent pre-rRNA and work in concert to generate RNA folding, modifications, rearrangements and cleavage as well as targeted degradation of pre-ribosomal RNA by the RNA exosome. This is Small ribosomal subunit protein eS19 (Rps19) from Rattus norvegicus (Rat).